A 77-amino-acid polypeptide reads, in one-letter code: Liver-expressed antimicrobial peptide 2 (77 aa).

Positions 1 to 22 (MWHLKLFAVLMICLLLLAQVDG) are cleaved as a signal peptide. The propeptide occupies 23-37 (SPIPQQSSAKRRPRR). Cystine bridges form between Cys-54–Cys-65 and Cys-60–Cys-70.

The protein belongs to the LEAP2 family.

The protein resides in the secreted. Its function is as follows. Has an antimicrobial activity. The chain is Liver-expressed antimicrobial peptide 2 (LEAP2) from Bos taurus (Bovine).